The following is a 438-amino-acid chain: Xylose isomerase (438 aa).

Active-site residues include histidine 103 and aspartate 106. 7 residues coordinate Mg(2+): glutamate 234, glutamate 270, histidine 273, aspartate 298, aspartate 309, aspartate 311, and aspartate 341.

It belongs to the xylose isomerase family. Homotetramer. It depends on Mg(2+) as a cofactor.

It is found in the cytoplasm. The catalysed reaction is alpha-D-xylose = alpha-D-xylulofuranose. The polypeptide is Xylose isomerase (Phocaeicola vulgatus (strain ATCC 8482 / DSM 1447 / JCM 5826 / CCUG 4940 / NBRC 14291 / NCTC 11154) (Bacteroides vulgatus)).